A 148-amino-acid polypeptide reads, in one-letter code: Ergosterol biosynthetic protein 28 (148 aa).

Over 1–25 (MFSLQDVITTTKTTLAAMPKGYLPK) the chain is Cytoplasmic. The helical transmembrane segment at 26–46 (WLLFISIVSVFNSIQTYVSGL) threads the bilayer. Over 47 to 92 (ELTRKVYERKPTETTHLSARTFGTWTFISCVIRFYGAMYLNEPHIF) the chain is Lumenal. A helical membrane pass occupies residues 93-113 (ELVFMSYMVALFHFGSELLIF). At 114 to 120 (RTCKLGK) the chain is on the cytoplasmic side. A helical membrane pass occupies residues 121-136 (GFMGPLVVSTTSLVWM). The Lumenal segment spans residues 137–148 (YKQREYYTGVAW).

It belongs to the ERG28 family. As to quaternary structure, heterotetramer of ERG25, ERG26, ERG27 and ERG28. ERG28 acts as a scaffold to tether ERG27 and other 4,4-demethylation-related enzymes, forming a demethylation enzyme complex, in the endoplasmic reticulum. Interacts with ERG25, ERG26 and ERG27. Also interacts with ERG1, ERG3, ERG5, ERG6 and ERG11.

It is found in the endoplasmic reticulum membrane. Functionally, part of the third module of ergosterol biosynthesis pathway that includes the late steps of the pathway. ERG28 has a role as a scaffold to help anchor the catalytic components of the C-4 demethylation complex ERG25, ERG26 and ERG27 to the endoplasmic reticulum. The third module or late pathway involves the ergosterol synthesis itself through consecutive reactions that mainly occur in the endoplasmic reticulum (ER) membrane. Firstly, the squalene synthase ERG9 catalyzes the condensation of 2 farnesyl pyrophosphate moieties to form squalene, which is the precursor of all steroids. Squalene synthase is crucial for balancing the incorporation of farnesyl diphosphate (FPP) into sterol and nonsterol isoprene synthesis. Secondly, the squalene epoxidase ERG1 catalyzes the stereospecific oxidation of squalene to (S)-2,3-epoxysqualene, which is considered to be a rate-limiting enzyme in steroid biosynthesis. Then, the lanosterol synthase ERG7 catalyzes the cyclization of (S)-2,3 oxidosqualene to lanosterol, a reaction that forms the sterol core. In the next steps, lanosterol is transformed to zymosterol through a complex process involving various demethylation, reduction and desaturation reactions. The lanosterol 14-alpha-demethylase ERG11 (also known as CYP51) catalyzes C14-demethylation of lanosterol to produce 4,4'-dimethyl cholesta-8,14,24-triene-3-beta-ol, which is critical for ergosterol biosynthesis. The C-14 reductase ERG24 reduces the C14=C15 double bond of 4,4-dimethyl-cholesta-8,14,24-trienol to produce 4,4-dimethyl-cholesta-8,24-dienol. 4,4-dimethyl-cholesta-8,24-dienol is substrate of the C-4 demethylation complex ERG25-ERG26-ERG27 in which ERG25 catalyzes the three-step monooxygenation required for the demethylation of 4,4-dimethyl and 4alpha-methylsterols, ERG26 catalyzes the oxidative decarboxylation that results in a reduction of the 3-beta-hydroxy group at the C-3 carbon to an oxo group, and ERG27 is responsible for the reduction of the keto group on the C-3. ERG28 has a role as a scaffold to help anchor ERG25, ERG26 and ERG27 to the endoplasmic reticulum and ERG29 regulates the activity of the iron-containing C4-methylsterol oxidase ERG25. Then, the sterol 24-C-methyltransferase ERG6 catalyzes the methyl transfer from S-adenosyl-methionine to the C-24 of zymosterol to form fecosterol. The C-8 sterol isomerase ERG2 catalyzes the reaction which results in unsaturation at C-7 in the B ring of sterols and thus converts fecosterol to episterol. The sterol-C5-desaturase ERG3 then catalyzes the introduction of a C-5 double bond in the B ring to produce 5-dehydroepisterol. The C-22 sterol desaturase ERG5 further converts 5-dehydroepisterol into ergosta-5,7,22,24(28)-tetraen-3beta-ol by forming the C-22(23) double bond in the sterol side chain. Finally, ergosta-5,7,22,24(28)-tetraen-3beta-ol is substrate of the C-24(28) sterol reductase ERG4 to produce ergosterol. The sequence is that of Ergosterol biosynthetic protein 28 from Saccharomyces cerevisiae (strain ATCC 204508 / S288c) (Baker's yeast).